The sequence spans 371 residues: O-phospho-L-seryl-tRNA:Cys-tRNA synthase 1 (371 aa).

Residues 78–79 (AR), asparagine 183, and 206–208 (SGH) each bind pyridoxal 5'-phosphate. Lysine 209 is modified (N6-(pyridoxal phosphate)lysine).

Belongs to the SepCysS family. In terms of assembly, homodimer. Probably interacts with SepRS. Requires pyridoxal 5'-phosphate as cofactor.

The catalysed reaction is O-phospho-L-seryl-tRNA(Cys) + hydrogen sulfide + H(+) = L-cysteinyl-tRNA(Cys) + phosphate. Converts O-phospho-L-seryl-tRNA(Cys) (Sep-tRNA(Cys)) to L-cysteinyl-tRNA(Cys) (Cys-tRNA(Cys)). This Archaeoglobus fulgidus (strain ATCC 49558 / DSM 4304 / JCM 9628 / NBRC 100126 / VC-16) protein is O-phospho-L-seryl-tRNA:Cys-tRNA synthase 1.